A 161-amino-acid chain; its full sequence is Anaerobic nitrite reductase Glb1-2 (161 aa).

In terms of domain architecture, Globin spans 9 to 158; that stretch reads AFTEEQEALV…LASAIIAEMK (150 aa). The Homodimerization signature appears at 42–46; it reads EIAPP. The heme b site is built by Ser52, Lys66, His70, Lys100, Thr104, and His105. The Homodimerization motif lies at 112 to 124; that stretch reads PEHFEVTKQALLD.

The protein belongs to the plant globin family. In terms of assembly, homodimer. It depends on heme b as a cofactor. As to expression, mainly expressed in root nodules and leaves, and, to a lower extent, in roots, stems, flowers and fruits. Accumulates in mature root nodules.

It carries out the reaction Fe(III)-heme b-[protein] + nitric oxide + H2O = Fe(II)-heme b-[protein] + nitrite + 2 H(+). In terms of biological role, phytoglobin that reduces nitrite to nitric oxide (NO) under anoxic conditions (e.g. during flooding or in waterlogged soil) and upon root nodulation. Required for general plant development and during nodulation, especially for the onset of symbiosis. Monitors nitric oxide (NO) levels during early phase of the nitrogen-fixing symbiosis and buffers oxygen in functioning nodules. Necessary for the production of pods. May not function as an oxygen storage or transport protein. Has an unusually high affinity for O(2) through a hexacoordinate heme iron because of a very low dissociation constant. The polypeptide is Anaerobic nitrite reductase Glb1-2 (Lotus japonicus (Lotus corniculatus var. japonicus)).